The primary structure comprises 541 residues: MRKQDKRSAEIYSISKALMAPTRLETTLNNFVNTLSLILRMRRGGLEIPASEGETKITAATRNSGSPSAADYTVPKAAIDQVMTAGRLVVPDVCNSELFKDQIKWRGIGPTAFIAAAVEVDHETGGMLWFECAEESDYDYEEEVHFLSMAANLAGRAIRLHRTISRRERTFAEEQQEQQNSRDEQSQSSARQRLLKNDGIIGESTALMTAVDTAKVMAETNSIVLLRGETGTGKECFAKLIHQHSTRQKKPFIKFNCPALSESLLESELFGHEKGAFTGAIAQRVGRFESANGGTLLLDEIGEIPPAFQAKLLRVIQEGEFERVGGTKTLKVDVRLIFATNKDLEMAVQNGEFREDLYYRISGVPLILPPLRHRDGDIPLLARAFLQRFNEENGRDLHFAPSALDHLSKCKFPGNVRELENCVRRTATLARSKTITSSDFACQTDQCFSSRLWKGVHCSHGHIEIDAPAGTTPLLGAPANDVPPKEPGSAGVASNLIERDRLISALEEAGWNQAKAARILEKTPRQVGYALRRHGVDVRKL.

The GAF domain maps to 23 to 158; sequence RLETTLNNFV…MAANLAGRAI (136 aa). A disordered region spans residues 170–191; sequence TFAEEQQEQQNSRDEQSQSSAR. The Sigma-54 factor interaction domain occupies 200–428; it reads IIGESTALMT…LENCVRRTAT (229 aa). ATP-binding positions include 228-235 and 291-300; these read GETGTGKE and ANGGTLLLDE. An inter-domain linker region spans residues 429-498; the sequence is LARSKTITSS…SAGVASNLIE (70 aa). Cys442 and Cys447 together coordinate a divalent metal cation. The segment at 499 to 541 is C-terminal DNA-binding domain; the sequence is RDRLISALEEAGWNQAKAARILEKTPRQVGYALRRHGVDVRKL. Residues 513–532 constitute a DNA-binding region (H-T-H motif); it reads QAKAARILEKTPRQVGYALR.

As to quaternary structure, interacts with sigma-54.

In terms of biological role, required for activation of most nif operons, which are directly involved in nitrogen fixation. This Rhizobium meliloti (strain 1021) (Ensifer meliloti) protein is Nif-specific regulatory protein (nifA).